The sequence spans 223 residues: Lipoprotein signal peptidase (223 aa).

Residues 1-20 (MNSAKVNPSGHAPTPAPTAS) are disordered. 4 helical membrane passes run 32–52 (LFFG…EAIF), 65–85 (WIIE…VFGL), 91–111 (LVFA…LFFF), and 116–136 (SCWL…NLYD). Catalysis depends on residues D156 and D175. A helical transmembrane segment spans residues 173 to 193 (IADSLLVTGAIMLLVQSFFFP). The interval 196 to 223 (PHGEADGNELPGRRAPDEPTEGTKPAAS) is disordered.

It belongs to the peptidase A8 family.

It is found in the cell inner membrane. It carries out the reaction Release of signal peptides from bacterial membrane prolipoproteins. Hydrolyzes -Xaa-Yaa-Zaa-|-(S,diacylglyceryl)Cys-, in which Xaa is hydrophobic (preferably Leu), and Yaa (Ala or Ser) and Zaa (Gly or Ala) have small, neutral side chains.. Its pathway is protein modification; lipoprotein biosynthesis (signal peptide cleavage). This protein specifically catalyzes the removal of signal peptides from prolipoproteins. The polypeptide is Lipoprotein signal peptidase (Rhodopirellula baltica (strain DSM 10527 / NCIMB 13988 / SH1)).